The chain runs to 290 residues: MKSGFAAILGRPSTGKSTLLNSICGHKISIISPIPQTTRNKIKGIFTDDRGQIIFIDTPGFHLSKKKFNIAMMNNIHSSIGEVELILYIIDIQDTPGEEENKMLEIIKNSKIKFLVLLNKVDLKNTKIKEITQFLKEKGIEDSNIIKISAEKKINTEELKNKIYENFSEGPLYYPQEYYTDQKINFRISEIIREKAIENLKEELPYSLYVDIDTLENKKRGLFIRANIFVANESQKGIIVGKNGKEIKSIGERARKTIAKIFETKCNLFLQVKLKKNWNKEDKLIKRLIN.

The region spanning 2-169 (KSGFAAILGR…KNKIYENFSE (168 aa)) is the Era-type G domain. The tract at residues 10-17 (GRPSTGKS) is G1. 10–17 (GRPSTGKS) serves as a coordination point for GTP. The interval 36–40 (QTTRN) is G2. The interval 57–60 (DTPG) is G3. Residues 57-61 (DTPGF) and 119-122 (NKVD) each bind GTP. Positions 119 to 122 (NKVD) are G4. The G5 stretch occupies residues 148–150 (ISA). The KH type-2 domain maps to 200–276 (LKEELPYSLY…NLFLQVKLKK (77 aa)).

It belongs to the TRAFAC class TrmE-Era-EngA-EngB-Septin-like GTPase superfamily. Era GTPase family. In terms of assembly, monomer.

The protein localises to the cytoplasm. It is found in the cell inner membrane. An essential GTPase that binds both GDP and GTP, with rapid nucleotide exchange. Plays a role in 16S rRNA processing and 30S ribosomal subunit biogenesis and possibly also in cell cycle regulation and energy metabolism. The chain is GTPase Era from Borreliella afzelii (strain PKo) (Borrelia afzelii).